The primary structure comprises 124 residues: Protein Rev (124 aa).

Serine 5 carries the phosphoserine; by host CK2 modification. The tract at residues isoleucine 19–asparagine 27 is homomultimerization. A disordered region spans residues glutamine 25–lysine 51. Residues threonine 35–lysine 51 carry the Nuclear localization signal and RNA-binding (RRE) motif. Positions lysine 37–glutamine 50 are enriched in basic residues. Positions leucine 74–glutamine 85 match the Nuclear export signal and binding to XPO1 motif. Positions threonine 90–glycine 106 are enriched in polar residues. A disordered region spans residues threonine 90–asparagine 124.

Belongs to the HIV-1 REV protein family. In terms of assembly, homomultimer; when bound to the RRE. Multimeric assembly is essential for activity and may involve XPO1. Binds to human KPNB1, XPO1, TNPO1, RANBP5 and IPO7. Interacts with the viral Integrase. Interacts with human KHDRBS1. Interacts with human NAP1; this interaction decreases Rev multimerization and stimulates its activity. Interacts with human DEAD-box helicases DDX3 and DDX24; these interactions may serve for viral RNA export to the cytoplasm and packaging, respectively. Interacts with human PSIP1; this interaction may inhibit HIV-1 DNA integration by promoting dissociation of the Integrase-LEDGF/p75 complex. Asymmetrically arginine dimethylated at one site by host PRMT6. Methylation impairs the RNA-binding activity and export of viral RNA from the nucleus to the cytoplasm. In terms of processing, phosphorylated by protein kinase CK2. Presence of, and maybe binding to the N-terminus of the regulatory beta subunit of CK2 is necessary for CK2-mediated Rev's phosphorylation.

It is found in the host nucleus. The protein localises to the host nucleolus. It localises to the host cytoplasm. In terms of biological role, escorts unspliced or incompletely spliced viral pre-mRNAs (late transcripts) out of the nucleus of infected cells. These pre-mRNAs carry a recognition sequence called Rev responsive element (RRE) located in the env gene, that is not present in fully spliced viral mRNAs (early transcripts). This function is essential since most viral proteins are translated from unspliced or partially spliced pre-mRNAs which cannot exit the nucleus by the pathway used by fully processed cellular mRNAs. Rev itself is translated from a fully spliced mRNA that readily exits the nucleus. Rev's nuclear localization signal (NLS) binds directly to KPNB1/Importin beta-1 without previous binding to KPNA1/Importin alpha-1. KPNB1 binds to the GDP bound form of RAN (Ran-GDP) and targets Rev to the nucleus. In the nucleus, the conversion from Ran-GDP to Ran-GTP dissociates Rev from KPNB1 and allows Rev's binding to the RRE in viral pre-mRNAs. Rev multimerization on the RRE via cooperative assembly exposes its nuclear export signal (NES) to the surface. Rev can then form a complex with XPO1/CRM1 and Ran-GTP, leading to nuclear export of the complex. Conversion from Ran-GTP to Ran-GDP mediates dissociation of the Rev/RRE/XPO1/RAN complex, so that Rev can return to the nucleus for a subsequent round of export. Beside KPNB1, also seems to interact with TNPO1/Transportin-1, RANBP5/IPO5 and IPO7/RANBP7 for nuclear import. The nucleoporin-like HRB/RIP is an essential cofactor that probably indirectly interacts with Rev to release HIV RNAs from the perinuclear region to the cytoplasm. In Pan (chimpanzees), this protein is Protein Rev.